Here is a 164-residue protein sequence, read N- to C-terminus: Putative pre-16S rRNA nuclease (164 aa).

Belongs to the YqgF nuclease family.

The protein localises to the cytoplasm. Functionally, could be a nuclease involved in processing of the 5'-end of pre-16S rRNA. The sequence is that of Putative pre-16S rRNA nuclease from Rhizobium johnstonii (strain DSM 114642 / LMG 32736 / 3841) (Rhizobium leguminosarum bv. viciae).